Reading from the N-terminus, the 787-residue chain is Patatin-like phospholipase domain-containing protein OOU_Y34scaffold00095g16.3 (787 aa).

Disordered regions lie at residues Ala47–Phe69 and Lys137–Arg164. Low complexity predominate over residues Ala59–Phe69. Over residues His144–Lys157 the composition is skewed to basic residues. The chain crosses the membrane as a helical span at residues Trp180–Thr200. The PNPLA domain occupies Leu375–Asn566. A GXSXG motif is present at residues Gly406–Gly410. The active-site Nucleophile is Ser408. Asp553 (proton acceptor) is an active-site residue. The segment at Gly745–Lys787 is disordered. Acidic residues predominate over residues Thr746–Ala759. Over residues Thr777–Lys787 the composition is skewed to polar residues.

It belongs to the PLPL family.

The protein localises to the membrane. Probable lipid hydrolase. This Pyricularia oryzae (strain Y34) (Rice blast fungus) protein is Patatin-like phospholipase domain-containing protein OOU_Y34scaffold00095g16.3.